A 283-amino-acid chain; its full sequence is Formamidopyrimidine-DNA glycosylase (283 aa).

Residue Pro2 is the Schiff-base intermediate with DNA of the active site. The active-site Proton donor is the Glu3. Lys61 (proton donor; for beta-elimination activity) is an active-site residue. DNA is bound by residues His94, Arg113, and Lys159. The FPG-type zinc finger occupies 245 to 279; that stretch reads DAYGREGESCRRCGAVMRREKFMNRSSFYCPKCQP. Arg269 (proton donor; for delta-elimination activity) is an active-site residue.

This sequence belongs to the FPG family. In terms of assembly, monomer. Zn(2+) is required as a cofactor.

The enzyme catalyses Hydrolysis of DNA containing ring-opened 7-methylguanine residues, releasing 2,6-diamino-4-hydroxy-5-(N-methyl)formamidopyrimidine.. It carries out the reaction 2'-deoxyribonucleotide-(2'-deoxyribose 5'-phosphate)-2'-deoxyribonucleotide-DNA = a 3'-end 2'-deoxyribonucleotide-(2,3-dehydro-2,3-deoxyribose 5'-phosphate)-DNA + a 5'-end 5'-phospho-2'-deoxyribonucleoside-DNA + H(+). Its function is as follows. Involved in base excision repair of DNA damaged by oxidation or by mutagenic agents. Acts as a DNA glycosylase that recognizes and removes damaged bases. Has a preference for oxidized purines, such as 7,8-dihydro-8-oxoguanine (8-oxoG). Has AP (apurinic/apyrimidinic) lyase activity and introduces nicks in the DNA strand. Cleaves the DNA backbone by beta-delta elimination to generate a single-strand break at the site of the removed base with both 3'- and 5'-phosphates. The chain is Formamidopyrimidine-DNA glycosylase from Mycolicibacterium paratuberculosis (strain ATCC BAA-968 / K-10) (Mycobacterium paratuberculosis).